A 317-amino-acid chain; its full sequence is Melanocyte-stimulating hormone receptor (317 aa).

Residues 1-37 (MAVQGFQRRLLGSLNSTPTAIPQLGLAANQTGARCLE) are Extracellular-facing. Asn29 carries an N-linked (GlcNAc...) asparagine glycan. The chain crosses the membrane as a helical span at residues 38–63 (VSIPDGLFLSLGLVSLVENVLVVATI). Over 64-72 (AKNRNLHSP) the chain is Cytoplasmic. The helical transmembrane segment at 73–93 (TYCFICCLALSDLLVSGGNVL) threads the bilayer. Topologically, residues 94 to 118 (ETVVILLLEASALAARAAVVQPLDN) are extracellular. The helical transmembrane segment at 119–140 (VIDVITCSSMVSSLCFLGAIAM) threads the bilayer. At 141-163 (DRYVSIFYALRYHSIVTLPRARQ) the chain is on the cytoplasmic side. The helical transmembrane segment at 164-183 (AIAAIWVASVLFSTLFIAYY) threads the bilayer. Residues 184–191 (DHAAVLLC) are Extracellular-facing. A helical transmembrane segment spans residues 192-211 (LVVFFLAMLVLMAVLYVHML). Residues 212–240 (ARACQHAQGIARLHKRQRPLHQGFGLKGA) lie on the Cytoplasmic side of the membrane. Residues 241-266 (VTLTILLGIFFLCWGPFFLHLTLIVL) traverse the membrane as a helical segment. The Extracellular segment spans residues 267-279 (CPQHPTCSCIFKN). The helical transmembrane segment at 280-300 (FNLFLTLIICNAIIDPLIYAF) threads the bilayer. Topologically, residues 301 to 317 (RRQELRRTLKEGLTCSW) are cytoplasmic. A lipid anchor (S-palmitoyl cysteine) is attached at Cys315.

The protein belongs to the G-protein coupled receptor 1 family. As to quaternary structure, interacts with MGRN1, but does not undergo MGRN1-mediated ubiquitination; this interaction competes with GNAS-binding and thus inhibits agonist-induced cAMP production. Interacts with OPN3; the interaction results in a decrease in MC1R-mediated cAMP signaling and ultimately a decrease in melanin production in melanocytes.

The protein resides in the cell membrane. In terms of biological role, receptor for MSH (alpha, beta and gamma) and ACTH. The activity of this receptor is mediated by G proteins which activate adenylate cyclase. Mediates melanogenesis, the production of eumelanin (black/brown) and phaeomelanin (red/yellow), via regulation of cAMP signaling in melanocytes. The polypeptide is Melanocyte-stimulating hormone receptor (MC1R) (Hylobates lar (Lar gibbon)).